Consider the following 374-residue polypeptide: Phosphatidyl-myo-inositol mannosyltransferase (374 aa).

2 residues coordinate GDP-alpha-D-mannose: Tyr9 and Gly16. A 1,2-diacyl-sn-glycero-3-phospho-(1D-myo-inositol)-binding positions include Gln18, 62 to 63 (YN), and Arg68. GDP-alpha-D-mannose is bound by residues Arg196, 201-202 (RK), 251-253 (VDD), Lys256, 274-278 (ESFGI), and Glu282.

This sequence belongs to the glycosyltransferase group 1 family. Glycosyltransferase 4 subfamily. As to quaternary structure, monomer. Requires Mg(2+) as cofactor.

The protein resides in the cell membrane. The catalysed reaction is a 1,2-diacyl-sn-glycero-3-phospho-(1D-myo-inositol) + GDP-alpha-D-mannose = a 1,2-diacyl-sn-glycero-3-phospho-[alpha-D-mannopyranosyl-(1&lt;-&gt;6)-D-myo-inositol] + GDP + H(+). It participates in phospholipid metabolism; phosphatidylinositol metabolism. Involved in the biosynthesis of phosphatidyl-myo-inositol mannosides (PIM) which are early precursors in the biosynthesis of lipomannans (LM) and lipoarabinomannans (LAM). Catalyzes the addition of a mannosyl residue from GDP-D-mannose (GDP-Man) to the position 2 of the carrier lipid phosphatidyl-myo-inositol (PI) to generate a phosphatidyl-myo-inositol bearing an alpha-1,2-linked mannose residue (PIM1). The polypeptide is Phosphatidyl-myo-inositol mannosyltransferase (Mycobacterium leprae (strain TN)).